A 3930-amino-acid chain; its full sequence is Hybrid PKS-NRPS synthetase apdA (3930 aa).

The Ketosynthase family 3 (KS3) domain occupies 2-440 (QDLIAIVGSA…GTNAHAIIEG (439 aa)). Catalysis depends on for beta-ketoacyl synthase activity residues Cys-176, His-313, and His-361. The malonyl-CoA:ACP transacylase (MAT) domain stretch occupies residues 557-879 (IFTGQGAQWA…MRRGDNEIEA (323 aa)). The N-terminal hotdog fold stretch occupies residues 948 to 1085 (HELLGRRVPD…GRLIINYGDP (138 aa)). The segment at 948–1251 (HELLGRRVPD…SMKSMSEPQP (304 aa)) is dehydratase (DH) domain. The PKS/mFAS DH domain maps to 948–1252 (HELLGRRVPD…MKSMSEPQPE (305 aa)). Residue His-980 is the Proton acceptor; for dehydratase activity of the active site. The segment at 1100–1252 (NVPVDMGRFY…MKSMSEPQPE (153 aa)) is C-terminal hotdog fold. Asp-1159 (proton donor; for dehydratase activity) is an active-site residue. The segment at 1389–1588 (QDDMLNRFYM…FSGLDCLAPD (200 aa)) is methyltransferase (MT) domain. The tract at residues 2088-2229 (ATYLLAGMTG…SLASIIGNAA (142 aa)) is ketoreductase (KR) domain. Positions 2326–2403 (AVIPIVQEAF…QICEDAVRQF (78 aa)) constitute a Carrier 1 domain. O-(pantetheine 4'-phosphoryl)serine is present on Ser-2363. Disordered stretches follow at residues 2414–2433 (VAPNMTEKPETKSHPSSNAT) and 2444–2494 (DAAN…VDAD). The span at 2445–2473 (AANGDYESSSQGDDSRGNSSSSSSHTSPS) shows a compositional bias: low complexity. Residues 2509–2937 (PASFAQSRLW…SLPVNQLPVT (429 aa)) are condensation (C) domain. Residues 2971-3371 (KSFPEETAIK…GTLIFMGRMD (401 aa)) are adenylation (A) (KR) domain. Residues 2971 to 3371 (KSFPEETAIK…GTLIFMGRMD (401 aa)) are reductase (RED) domain. In terms of domain architecture, Carrier 2 spans 3493–3572 (RHLSLAEGEL…QMARRISRRK (80 aa)). Ser-3532 carries the post-translational modification O-(pantetheine 4'-phosphoryl)serine.

It in the C-terminal section; belongs to the NRP synthetase family.

Its pathway is secondary metabolite biosynthesis. Functionally, hybrid PKS-NRPS synthetase; part of the gene cluster that mediates the biosynthesis of aspyridones. The polyketide-amino acid backbone preaspyridone A is first assembled by the PKS-NRPS hybrid apdA. The assembly of preaspyridone A is initiated by loading of malonyl-CoA onto apdA, followed by decarboxylation to yield the acetyl starter unit. The growing polyketide chain then elongates into a tetraketide. The adpA PKS module catalyzes three Claisen condensations, as well as beta-keto processing and methylation. Alpha-methylation step during polyketide synthesis is a prerequisite and a key checkpoint for chain transfer between PKS and NRPS modules. The downstream NRPS module contains the condensation (C), adenylation (A), and thiolation (T) domains and catalyzes the incorporation of tyrosine via the formation of the L-tyrosinyl-thioester and the amide linkage between L-tyrosinyl-thioester and the tetraketide. The bimodular assembly line is terminated with a reductase (R) domain that facilitates formation and release of the tetramic acid product. Because apdA lacks a designated enoylreductase (ER) domain, the required activity is provided the enoyl reductase apdC. ApdC appears to operate with different stereoselectivity in different PKS cycle. Combined with apdC, apdA is proposed to synthesize preaspyridone A via about 20 enzymatic steps. A number of oxidative steps performed successively by the cytochrome P450 monooxygenases apdE and apdB are required for the conversion of preaspyridone A to aspyridone A. The cytochrome P450 monooxygenase apdE is responsible for the oxidative dephenylation of preaspyridone A. Finally, the predicted FAD-dependent monooxygenase apdD and the acyl-CoA dehydrogenase apdG may be involved in the transformation of aspyridone A into aspyridone B. In Emericella nidulans (strain FGSC A4 / ATCC 38163 / CBS 112.46 / NRRL 194 / M139) (Aspergillus nidulans), this protein is Hybrid PKS-NRPS synthetase apdA.